The chain runs to 453 residues: Homogentisate 1,2-dioxygenase (453 aa).

Histidine 304 serves as the catalytic Proton acceptor. Fe cation is bound by residues histidine 347 and glutamate 353. 2 residues coordinate homogentisate: tyrosine 362 and histidine 383. Histidine 383 contacts Fe cation.

The protein belongs to the homogentisate dioxygenase family. In terms of assembly, hexamer; dimer of trimers. Fe cation serves as cofactor.

The enzyme catalyses homogentisate + O2 = 4-maleylacetoacetate + H(+). It participates in amino-acid degradation; L-phenylalanine degradation; acetoacetate and fumarate from L-phenylalanine: step 4/6. Functionally, involved in the catabolism of homogentisate (2,5-dihydroxyphenylacetate or 2,5-OH-PhAc), a central intermediate in the degradation of phenylalanine and tyrosine. Catalyzes the oxidative ring cleavage of the aromatic ring of homogentisate to yield maleylacetoacetate. This chain is Homogentisate 1,2-dioxygenase, found in Sinorhizobium fredii (strain NBRC 101917 / NGR234).